The sequence spans 708 residues: Glycogen [starch] synthase isoform 1 (708 aa).

Arginine 20 is a binding site for UDP. Serine 159 bears the Phosphoserine mark. Residues histidine 193 and arginine 199 each contribute to the UDP-alpha-D-glucose site. Positions 280, 281, 283, 286, and 290 each coordinate alpha-D-glucose 6-phosphate. Arginine 320 serves as a coordination point for UDP. Position 320 (arginine 320) interacts with UDP-alpha-D-glucose. The residue at position 363 (serine 363) is a Phosphoserine. Histidine 500 lines the alpha-D-glucose 6-phosphate pocket. UDP-alpha-D-glucose contacts are provided by glutamate 509, tryptophan 511, and glycine 512. A UDP-binding site is contributed by threonine 514. A Phosphoserine modification is found at serine 560. Residues arginine 583 and arginine 587 each coordinate alpha-D-glucose 6-phosphate. Phosphoserine is present on residues serine 651 and serine 655. Serine 660 and serine 662 each carry phosphoserine; by PKA. The tract at residues 687–708 (STNGAIDNDDDDNDTSAYYEDN) is disordered. The span at 693 to 708 (DNDDDDNDTSAYYEDN) shows a compositional bias: acidic residues.

Belongs to the glycosyltransferase 3 family.

It catalyses the reaction [(1-&gt;4)-alpha-D-glucosyl](n) + UDP-alpha-D-glucose = [(1-&gt;4)-alpha-D-glucosyl](n+1) + UDP + H(+). It functions in the pathway glycan biosynthesis; glycogen biosynthesis. Allosteric activation by glucose-6-phosphate, and phosphorylation by a cAMP-dependent kinase. In terms of biological role, glycogen synthase participates in the glycogen biosynthetic process along with glycogenin and glycogen branching enzyme. Extends the primer composed of a few glucose units formed by glycogenin by adding new glucose units to it. In this context, glycogen synthase transfers the glycosyl residue from UDP-Glc to the non-reducing end of alpha-1,4-glucan. This Saccharomyces cerevisiae (strain ATCC 204508 / S288c) (Baker's yeast) protein is Glycogen [starch] synthase isoform 1 (GSY1).